The following is a 510-amino-acid chain: Histidine ammonia-lyase (510 aa).

Residues 143–145 (ASG) constitute a cross-link (5-imidazolinone (Ala-Gly)). Ser144 is subject to 2,3-didehydroalanine (Ser).

Belongs to the PAL/histidase family. In terms of processing, contains an active site 4-methylidene-imidazol-5-one (MIO), which is formed autocatalytically by cyclization and dehydration of residues Ala-Ser-Gly.

It is found in the cytoplasm. The enzyme catalyses L-histidine = trans-urocanate + NH4(+). It functions in the pathway amino-acid degradation; L-histidine degradation into L-glutamate; N-formimidoyl-L-glutamate from L-histidine: step 1/3. The polypeptide is Histidine ammonia-lyase (Psychromonas ingrahamii (strain DSM 17664 / CCUG 51855 / 37)).